The following is an 84-amino-acid chain: MAHKKAGGSTRNGRDSESKRLGVKRFGGESVLAGNIIVRQRGTKFHAGVNVGIGRDHTLFALTDGKVKFEVKGPNNRKFVSIED.

The tract at residues 1 to 22 is disordered; sequence MAHKKAGGSTRNGRDSESKRLG.

The protein belongs to the bacterial ribosomal protein bL27 family.

The polypeptide is Large ribosomal subunit protein bL27 (Shewanella amazonensis (strain ATCC BAA-1098 / SB2B)).